Reading from the N-terminus, the 163-residue chain is Putative protein CASTOR3P (163 aa).

It belongs to the GATS family.

This chain is Putative protein CASTOR3P, found in Homo sapiens (Human).